Consider the following 362-residue polypeptide: Fructose-bisphosphate aldolase (362 aa).

Ser65 is a D-glyceraldehyde 3-phosphate binding site. Asp112 serves as the catalytic Proton donor. 4 residues coordinate Zn(2+): His113, Asp147, Glu177, and His229. Gly230 provides a ligand contact to dihydroxyacetone phosphate. His268 provides a ligand contact to Zn(2+). Dihydroxyacetone phosphate is bound by residues 269 to 271 and 290 to 293; these read GGS and NVDT.

The protein belongs to the class II fructose-bisphosphate aldolase family. In terms of assembly, homodimer. Zn(2+) is required as a cofactor.

The enzyme catalyses beta-D-fructose 1,6-bisphosphate = D-glyceraldehyde 3-phosphate + dihydroxyacetone phosphate. The protein operates within carbohydrate degradation; glycolysis; D-glyceraldehyde 3-phosphate and glycerone phosphate from D-glucose: step 4/4. Catalyzes the aldol condensation of dihydroxyacetone phosphate (DHAP or glycerone-phosphate) with glyceraldehyde 3-phosphate (G3P) to form fructose 1,6-bisphosphate (FBP) in gluconeogenesis and the reverse reaction in glycolysis. This Aspergillus oryzae (strain ATCC 42149 / RIB 40) (Yellow koji mold) protein is Fructose-bisphosphate aldolase (fbaA).